We begin with the raw amino-acid sequence, 157 residues long: Crossover junction endodeoxyribonuclease RuvC (157 aa).

Catalysis depends on residues Asp-7, Glu-67, and Asp-140. Mg(2+)-binding residues include Asp-7, Glu-67, and Asp-140.

This sequence belongs to the RuvC family. In terms of assembly, homodimer which binds Holliday junction (HJ) DNA. The HJ becomes 2-fold symmetrical on binding to RuvC with unstacked arms; it has a different conformation from HJ DNA in complex with RuvA. In the full resolvosome a probable DNA-RuvA(4)-RuvB(12)-RuvC(2) complex forms which resolves the HJ. The cofactor is Mg(2+).

It localises to the cytoplasm. The enzyme catalyses Endonucleolytic cleavage at a junction such as a reciprocal single-stranded crossover between two homologous DNA duplexes (Holliday junction).. In terms of biological role, the RuvA-RuvB-RuvC complex processes Holliday junction (HJ) DNA during genetic recombination and DNA repair. Endonuclease that resolves HJ intermediates. Cleaves cruciform DNA by making single-stranded nicks across the HJ at symmetrical positions within the homologous arms, yielding a 5'-phosphate and a 3'-hydroxyl group; requires a central core of homology in the junction. The consensus cleavage sequence is 5'-(A/T)TT(C/G)-3'. Cleavage occurs on the 3'-side of the TT dinucleotide at the point of strand exchange. HJ branch migration catalyzed by RuvA-RuvB allows RuvC to scan DNA until it finds its consensus sequence, where it cleaves and resolves the cruciform DNA. The protein is Crossover junction endodeoxyribonuclease RuvC of Rickettsia bellii (strain RML369-C).